Consider the following 219-residue polypeptide: Probable GTP-binding protein EngB (219 aa).

The 184-residue stretch at Val24–Pro207 folds into the EngB-type G domain. GTP-binding positions include Gly32–Ser39, Gly59–His63, Asp81–Gly84, Thr148–Asp151, and Phe186–Ala188. Ser39 and Thr61 together coordinate Mg(2+).

The protein belongs to the TRAFAC class TrmE-Era-EngA-EngB-Septin-like GTPase superfamily. EngB GTPase family. Requires Mg(2+) as cofactor.

Functionally, necessary for normal cell division and for the maintenance of normal septation. The chain is Probable GTP-binding protein EngB from Burkholderia multivorans (strain ATCC 17616 / 249).